Here is a 695-residue protein sequence, read N- to C-terminus: Parasporal crystal protein Cry18Ca (695 aa).

The protein belongs to the delta endotoxin family.

In terms of biological role, binds to the brush border membrane vesicles of scarab larvae and damages the gut wall somehow to allow the vegetative cells of P.popilliae to enter the hemolymph. In Paenibacillus popilliae (Bacillus popilliae), this protein is Parasporal crystal protein Cry18Ca (cry18Ca).